The sequence spans 183 residues: Adenylate kinase (183 aa).

ATP is bound at residue 12–17; the sequence is GAGKGT. The tract at residues 32–61 is NMP; the sequence is STGDLLRSEVAAGTALGQEAEAVMNRGELV. AMP is bound by residues threonine 33, arginine 38, 59 to 61, 86 to 89, and glutamine 93; these read ELV and GFPR. The tract at residues 127–133 is LID; that stretch reads ARGRDDD. Arginine 128 provides a ligand contact to ATP. Positions 130 and 141 each coordinate AMP. Residue glycine 169 coordinates ATP.

This sequence belongs to the adenylate kinase family. In terms of assembly, monomer.

Its subcellular location is the cytoplasm. The catalysed reaction is AMP + ATP = 2 ADP. The protein operates within purine metabolism; AMP biosynthesis via salvage pathway; AMP from ADP: step 1/1. In terms of biological role, catalyzes the reversible transfer of the terminal phosphate group between ATP and AMP. Plays an important role in cellular energy homeostasis and in adenine nucleotide metabolism. The protein is Adenylate kinase of Parasynechococcus marenigrum (strain WH8102).